The primary structure comprises 424 residues: Histidine--tRNA ligase (424 aa).

Belongs to the class-II aminoacyl-tRNA synthetase family. Homodimer.

It is found in the cytoplasm. It catalyses the reaction tRNA(His) + L-histidine + ATP = L-histidyl-tRNA(His) + AMP + diphosphate + H(+). This chain is Histidine--tRNA ligase, found in Shewanella amazonensis (strain ATCC BAA-1098 / SB2B).